The following is a 135-amino-acid chain: Small ribosomal subunit protein uS8 (135 aa).

The protein belongs to the universal ribosomal protein uS8 family. As to quaternary structure, part of the 30S ribosomal subunit. Contacts proteins S5 and S12.

Functionally, one of the primary rRNA binding proteins, it binds directly to 16S rRNA central domain where it helps coordinate assembly of the platform of the 30S subunit. The polypeptide is Small ribosomal subunit protein uS8 (Nocardioides sp. (strain ATCC BAA-499 / JS614)).